Consider the following 347-residue polypeptide: Guanine nucleotide-binding protein alpha-6 subunit (347 aa).

The region spanning 30-347 is the G-alpha domain; the sequence is GITQVLLLGA…IIVGHVMDLV (318 aa). The interval 33–46 is G1 motif; sequence QVLLLGAGESGKST. Residues 38 to 45, 172 to 178, 197 to 201, 266 to 269, and A322 contribute to the GTP site; these read GAGESGKS, LRARVTT, DVGGQ, and NKKD. Mg(2+)-binding residues include S45 and T178. The interval 170–178 is G2 motif; sequence DALRARVTT. Residues 193 to 202 form a G3 motif region; it reads MKIIDVGGQR. The tract at residues 262 to 269 is G4 motif; sequence ILFLNKKD. Residues 320-325 form a G5 motif region; the sequence is TIAVDT.

Belongs to the G-alpha family. G proteins are composed of 3 units; alpha, beta and gamma. The alpha chain contains the guanine nucleotide binding site.

In terms of biological role, guanine nucleotide-binding proteins (G proteins) are involved as modulators or transducers in various transmembrane signaling systems. G alpha-6 is involved in the folic acid chemotaxis signal transduction pathway. The protein is Guanine nucleotide-binding protein alpha-6 subunit (gpaF) of Dictyostelium discoideum (Social amoeba).